Consider the following 341-residue polypeptide: RNA 3'-terminal phosphate cyclase (341 aa).

Residues Gln100 and 283 to 287 each bind ATP; that span reads FLGDQ. The Tele-AMP-histidine intermediate role is filled by His307.

Belongs to the RNA 3'-terminal cyclase family. Type 1 subfamily.

The protein resides in the cytoplasm. It catalyses the reaction a 3'-end 3'-phospho-ribonucleotide-RNA + ATP = a 3'-end 2',3'-cyclophospho-ribonucleotide-RNA + AMP + diphosphate. Its function is as follows. Catalyzes the conversion of 3'-phosphate to a 2',3'-cyclic phosphodiester at the end of RNA. The mechanism of action of the enzyme occurs in 3 steps: (A) adenylation of the enzyme by ATP; (B) transfer of adenylate to an RNA-N3'P to produce RNA-N3'PP5'A; (C) and attack of the adjacent 2'-hydroxyl on the 3'-phosphorus in the diester linkage to produce the cyclic end product. The biological role of this enzyme is unknown but it is likely to function in some aspects of cellular RNA processing. In Pyrococcus horikoshii (strain ATCC 700860 / DSM 12428 / JCM 9974 / NBRC 100139 / OT-3), this protein is RNA 3'-terminal phosphate cyclase (rtcA).